A 474-amino-acid polypeptide reads, in one-letter code: ATP synthase subunit beta 1 (474 aa).

An ATP-binding site is contributed by 157 to 164 (GGAGVGKT).

It belongs to the ATPase alpha/beta chains family. In terms of assembly, F-type ATPases have 2 components, CF(1) - the catalytic core - and CF(0) - the membrane proton channel. CF(1) has five subunits: alpha(3), beta(3), gamma(1), delta(1), epsilon(1). CF(0) has three main subunits: a(1), b(2) and c(9-12). The alpha and beta chains form an alternating ring which encloses part of the gamma chain. CF(1) is attached to CF(0) by a central stalk formed by the gamma and epsilon chains, while a peripheral stalk is formed by the delta and b chains.

Its subcellular location is the cell inner membrane. The catalysed reaction is ATP + H2O + 4 H(+)(in) = ADP + phosphate + 5 H(+)(out). Produces ATP from ADP in the presence of a proton gradient across the membrane. The catalytic sites are hosted primarily by the beta subunits. The sequence is that of ATP synthase subunit beta 1 from Polaromonas naphthalenivorans (strain CJ2).